A 286-amino-acid polypeptide reads, in one-letter code: 4-diphosphocytidyl-2-C-methyl-D-erythritol kinase (286 aa).

Lys13 is an active-site residue. 99-109 contributes to the ATP binding site; the sequence is PMGGGLGGGSS. Asp141 is an active-site residue.

This sequence belongs to the GHMP kinase family. IspE subfamily.

It catalyses the reaction 4-CDP-2-C-methyl-D-erythritol + ATP = 4-CDP-2-C-methyl-D-erythritol 2-phosphate + ADP + H(+). Its pathway is isoprenoid biosynthesis; isopentenyl diphosphate biosynthesis via DXP pathway; isopentenyl diphosphate from 1-deoxy-D-xylulose 5-phosphate: step 3/6. In terms of biological role, catalyzes the phosphorylation of the position 2 hydroxy group of 4-diphosphocytidyl-2C-methyl-D-erythritol. This chain is 4-diphosphocytidyl-2-C-methyl-D-erythritol kinase, found in Herminiimonas arsenicoxydans.